The primary structure comprises 91 residues: Small ribosomal subunit protein uS19 (91 aa).

The protein belongs to the universal ribosomal protein uS19 family.

Its function is as follows. Protein S19 forms a complex with S13 that binds strongly to the 16S ribosomal RNA. The chain is Small ribosomal subunit protein uS19 from Marinobacter nauticus (strain ATCC 700491 / DSM 11845 / VT8) (Marinobacter aquaeolei).